Consider the following 222-residue polypeptide: Large ribosomal subunit protein uL1 (222 aa).

It belongs to the universal ribosomal protein uL1 family. Part of the 50S ribosomal subunit.

In terms of biological role, binds directly to 23S rRNA. Probably involved in E site tRNA release. Its function is as follows. Protein L1 is also a translational repressor protein, it controls the translation of its operon by binding to its mRNA. The polypeptide is Large ribosomal subunit protein uL1 (Pyrobaculum aerophilum (strain ATCC 51768 / DSM 7523 / JCM 9630 / CIP 104966 / NBRC 100827 / IM2)).